An 856-amino-acid polypeptide reads, in one-letter code: MPQPVGRKSTALPSPVVPPQANASALRRVLRRARDGVTLNVDEAAIAMTARGDELADLCASAARVRDAGLVSAGRHGPSGRLAISYSRKVFIPVTRLCRDNCHYCTFVTVPGKLRAQGSSTYMEPDEILDVARRGAEFGCKEALFTLGDRPEARWRQAREWLGERGYDSTLSYVRAMAIRVLEQTGLLPHLNPGVMSWSEMSRLKPVAPSMGMMLETTSRRLFETKGLAHYGSPDKDPAVRLRVLTDAGRLSIPFTTGLLVGIGETLSERADTLHAIRKSHKEFGHIQEVIVQNFRAKEHTAMAAFPDAGIEDYLATVAVARLVLGPGMRIQAPPNLVSGDECRALVGAGVDDWGGVSPLTPDHVNPERPWPALDELAAVTAEAGYDMVQRLTAQPKYVQAGAAWIDPRVRGHVVALADPATGLARDVNPVGMPWQEPDDVASWGRVDLGAAIDTQGRNTAVRSDLASAFGDWESIREQVHELAVRAPERIDTDVLAALRSAERAPAGCTDGEYLALATADGPALEAVAALADSLRRDVVGDEVTFVVNRNINFTNICYTGCRFCAFAQRKGDADAYSLSVGEVADRAWEAHVAGATEVCMQGGIDPELPVTGYADLVRAVKARVPSMHVHAFSPMEIANGVTKSGLSIREWLIGLREAGLDTIPGTAAEILDDEVRWVLTKGKLPTSLWIEIVTTAHEVGLRSSSTMMYGHVDSPRHWVAHLNVLRDIQDRTGGFTEFVPLPFVHQNSPLYLAGAARPGPSHRDNRAVHALARIMLHGRISHIQTSWVKLGVRRTQVMLEGGANDLGGTLMEETISRMAGSEHGSAKTVAELVAIAEGIGRPARQRTTTYALLAA.

2 consecutive Radical SAM core domains span residues 84–336 and 544–785; these read ISYS…APPN and VTFV…SHIQ. The tract at residues 85–417 is cofG-like; sequence SYSRKVFIPV…PRVRGHVVAL (333 aa). [4Fe-4S] cluster-binding residues include C98, C102, C105, C558, C562, and C565. The cofH-like stretch occupies residues 521-854; the sequence is DGPALEAVAA…RQRTTTYALL (334 aa).

This sequence in the N-terminal section; belongs to the radical SAM superfamily. CofG family. The protein in the C-terminal section; belongs to the radical SAM superfamily. CofH family. The cofactor is [4Fe-4S] cluster.

It catalyses the reaction 5-amino-6-(D-ribitylamino)uracil + L-tyrosine + S-adenosyl-L-methionine = 5-amino-5-(4-hydroxybenzyl)-6-(D-ribitylimino)-5,6-dihydrouracil + 2-iminoacetate + 5'-deoxyadenosine + L-methionine + H(+). It carries out the reaction 5-amino-5-(4-hydroxybenzyl)-6-(D-ribitylimino)-5,6-dihydrouracil + S-adenosyl-L-methionine = 7,8-didemethyl-8-hydroxy-5-deazariboflavin + 5'-deoxyadenosine + L-methionine + NH4(+) + H(+). It functions in the pathway cofactor biosynthesis; coenzyme F0 biosynthesis. Its function is as follows. Catalyzes the radical-mediated synthesis of 7,8-didemethyl-8-hydroxy-5-deazariboflavin (FO) from 5-amino-6-(D-ribitylamino)uracil and L-tyrosine. The polypeptide is FO synthase (fbiC) (Mycobacterium bovis (strain ATCC BAA-935 / AF2122/97)).